The primary structure comprises 429 residues: Adenylosuccinate synthetase (429 aa).

Residues 12-18 (GDEGKGK) and 40-42 (GHT) contribute to the GTP site. The Proton acceptor role is filled by D13. Mg(2+) is bound by residues D13 and G40. Residues 13–16 (DEGK), 38–41 (NAGH), T129, R143, Q223, T238, and R302 contribute to the IMP site. Residue H41 is the Proton donor of the active site. 298-304 (VVTGRKR) provides a ligand contact to substrate. GTP-binding positions include R304, 330 to 332 (KLD), and 412 to 414 (STS).

The protein belongs to the adenylosuccinate synthetase family. In terms of assembly, homodimer. Mg(2+) serves as cofactor.

The protein resides in the cytoplasm. It carries out the reaction IMP + L-aspartate + GTP = N(6)-(1,2-dicarboxyethyl)-AMP + GDP + phosphate + 2 H(+). It functions in the pathway purine metabolism; AMP biosynthesis via de novo pathway; AMP from IMP: step 1/2. In terms of biological role, plays an important role in the de novo pathway of purine nucleotide biosynthesis. Catalyzes the first committed step in the biosynthesis of AMP from IMP. This chain is Adenylosuccinate synthetase, found in Bartonella tribocorum (strain CIP 105476 / IBS 506).